Consider the following 123-residue polypeptide: Small ribosomal subunit protein uS12c (123 aa).

Belongs to the universal ribosomal protein uS12 family. Part of the 30S ribosomal subunit.

It is found in the plastid. The protein localises to the chloroplast. In terms of biological role, with S4 and S5 plays an important role in translational accuracy. Located at the interface of the 30S and 50S subunits. The polypeptide is Small ribosomal subunit protein uS12c (rps12) (Huperzia lucidula (Shining clubmoss)).